A 209-amino-acid polypeptide reads, in one-letter code: Redox-sensing transcriptional repressor Rex (209 aa).

The segment at residues 16 to 55 (VYIQVLTGLKRDGVEVISSEKLARACSVNPSQIRKDLAYF) is a DNA-binding region (H-T-H motif). 90-95 (GVGNLG) serves as a coordination point for NAD(+).

This sequence belongs to the transcriptional regulatory Rex family. As to quaternary structure, homodimer.

Its subcellular location is the cytoplasm. In terms of biological role, modulates transcription in response to changes in cellular NADH/NAD(+) redox state. This chain is Redox-sensing transcriptional repressor Rex, found in Maridesulfovibrio salexigens (strain ATCC 14822 / DSM 2638 / NCIMB 8403 / VKM B-1763) (Desulfovibrio salexigens).